Consider the following 831-residue polypeptide: MRLPYSWLREVVAVGASGWDVTPGELEQTLLRIGHEVEEVIPLGPVDGPVTVGRVADIEELTGYKKPIRACAVDIGDRQYREIICGATNFAVGDLVVVALPGATLPGGFTISARKAYGRNSDGMICSAAELNLGADHSGILVLPPGAAEPGADGAGVLGLDDVVFHLAITPDRGYCMSVRGLARELACAYDLDFVDPASNSRVPPLPIEGPAWPLTVQPETGVRRFALRPVIGIDPAAVSPWWLQRRLLLCGIRATCPAVDVTNYVMLELGHPMHAHDRNRISGTLGVRFARSGETAVTLDGIERKLDTADVLIVDDAATAAIGGVMGAASTEVRADSTDVLLEAAIWDPAAVSRTQRRLHLPSEAARRYERTVDPAISVAALDRCARLLADIAGGEVSPTLTDWRGDPPCDDWSPPPIRMGVDVPDRIAGVAYPQGTTARRLAQIGAVVTHDGDTLTVTPPSWRPDLRQPADLVEEVLRLEGLEVIPSVLPPAPAGRGLTAGQQRRRTIGRSLALSGYVEILPTPFLPAGVFDLWGLEADDSRRMTTRVLNPLEADRPQLATTLLPALLEALVRNVSRGLVDVALFAIAQVVQPTEQTRGVGLIPVDRRPTDDEIAMLDASLPRQPQHVAAVLAGLREPRGPWGPGRPVEAADAFEAVRIIARASRVDVTLRPAQYLPWHPGRCAQVFVGESSVGHAGQLHPAVIERSGLPKGTCAVELNLDAIPCSAPLPAPRVSPYPAVFQDVSLVVAADIPAQAVADAVRAGAGDLLEDIALFDVFTGPQIGEHRKSLTFALRFRAPDRTLTEDDASAARDAAVQSAAERVGAVLRG.

A tRNA-binding domain is found at 44–155 (GPVDGPVTVG…GAAEPGADGA (112 aa)). The region spanning 414–489 (WSPPPIRMGV…RLEGLEVIPS (76 aa)) is the B5 domain. Residues Asp467, Asp473, Glu476, and Glu477 each contribute to the Mg(2+) site. The 94-residue stretch at 737–830 (SPYPAVFQDV…AAERVGAVLR (94 aa)) folds into the FDX-ACB domain.

This sequence belongs to the phenylalanyl-tRNA synthetase beta subunit family. Type 1 subfamily. As to quaternary structure, tetramer of two alpha and two beta subunits. Requires Mg(2+) as cofactor.

It is found in the cytoplasm. It carries out the reaction tRNA(Phe) + L-phenylalanine + ATP = L-phenylalanyl-tRNA(Phe) + AMP + diphosphate + H(+). This is Phenylalanine--tRNA ligase beta subunit (pheT) from Mycobacterium tuberculosis (strain ATCC 25618 / H37Rv).